The chain runs to 124 residues: MYVSISFLLGLSHLVLCCLLTFIVNFYLPPESIDFEFMAHNWSKGRSPSSTLGLSWFKAGFRFSDGWSMFYSFGLPGVALPGSPPRSHLLPGTQILIRSFQPCESAKHSARLSSLLTTTSYSVS.

The Cytoplasmic portion of the chain corresponds to 1–2 (MY). A helical membrane pass occupies residues 3–23 (VSISFLLGLSHLVLCCLLTFI). Topologically, residues 24–124 (VNFYLPPESI…LLTTTSYSVS (101 aa)) are extracellular. Asparagine 41 carries an N-linked (GlcNAc...) asparagine glycan.

Its subcellular location is the membrane. The polypeptide is Putative transmembrane protein FLJ36131 (Homo sapiens (Human)).